A 176-amino-acid chain; its full sequence is Endoribonuclease YbeY (176 aa).

The Zn(2+) site is built by His-117, His-121, and His-127.

Belongs to the endoribonuclease YbeY family. Requires Zn(2+) as cofactor.

It is found in the cytoplasm. Functionally, single strand-specific metallo-endoribonuclease involved in late-stage 70S ribosome quality control and in maturation of the 3' terminus of the 16S rRNA. The chain is Endoribonuclease YbeY from Methylocella silvestris (strain DSM 15510 / CIP 108128 / LMG 27833 / NCIMB 13906 / BL2).